A 104-amino-acid chain; its full sequence is MNGTIYQRIEDNAHFRELVEKRQRFATILSIIMLAVYIGFILLIAFAPGWLGTPLNPNTSVTRGIPIGVGVIVISFVLTGIYIWRANGEFDRLNNEVLHEVQAS.

At 1–24 (MNGTIYQRIEDNAHFRELVEKRQR) the chain is on the cytoplasmic side. Residues 25–47 (FATILSIIMLAVYIGFILLIAFA) form a helical membrane-spanning segment. Residues 48 to 61 (PGWLGTPLNPNTSV) lie on the Periplasmic side of the membrane. The helical transmembrane segment at 62–84 (TRGIPIGVGVIVISFVLTGIYIW) threads the bilayer. Topologically, residues 85–104 (RANGEFDRLNNEVLHEVQAS) are cytoplasmic.

The protein resides in the cell inner membrane. This is Inner membrane protein YjcH (yjcH) from Escherichia coli (strain K12).